The sequence spans 400 residues: Elongation factor Tu-B (400 aa).

Positions Lys10–Glu209 constitute a tr-type G domain. The tract at residues Gly19 to Thr26 is G1. Residue Gly19–Thr26 coordinates GTP. Residue Thr26 coordinates Mg(2+). A G2 region spans residues Gly60–Asn64. Residues Asp81–Gly84 form a G3 region. Residues Asp81–His85 and Asn136–Asp139 contribute to the GTP site. Positions Asn136–Asp139 are G4. Residues Ser174–Leu176 form a G5 region.

Belongs to the TRAFAC class translation factor GTPase superfamily. Classic translation factor GTPase family. EF-Tu/EF-1A subfamily. Monomer.

It localises to the cytoplasm. The enzyme catalyses GTP + H2O = GDP + phosphate + H(+). Its function is as follows. GTP hydrolase that promotes the GTP-dependent binding of aminoacyl-tRNA to the A-site of ribosomes during protein biosynthesis. This Caldanaerobacter subterraneus subsp. tengcongensis (strain DSM 15242 / JCM 11007 / NBRC 100824 / MB4) (Thermoanaerobacter tengcongensis) protein is Elongation factor Tu-B.